We begin with the raw amino-acid sequence, 371 residues long: tRNA-specific 2-thiouridylase MnmA (371 aa).

ATP contacts are provided by residues 13–20 and Met-39; that span reads GMSGGVDS. An interaction with target base in tRNA region spans residues 99-101; the sequence is NPD. Catalysis depends on Cys-104, which acts as the Nucleophile. The cysteines at positions 104 and 200 are disulfide-linked. Gly-128 is a binding site for ATP. Residues 150-152 form an interaction with tRNA region; it reads KDQ. Cys-200 functions as the Cysteine persulfide intermediate in the catalytic mechanism. The interval 308–309 is interaction with tRNA; sequence RY.

The protein belongs to the MnmA/TRMU family.

It localises to the cytoplasm. It catalyses the reaction S-sulfanyl-L-cysteinyl-[protein] + uridine(34) in tRNA + AH2 + ATP = 2-thiouridine(34) in tRNA + L-cysteinyl-[protein] + A + AMP + diphosphate + H(+). Functionally, catalyzes the 2-thiolation of uridine at the wobble position (U34) of tRNA, leading to the formation of s(2)U34. The sequence is that of tRNA-specific 2-thiouridylase MnmA from Listeria monocytogenes serovar 1/2a (strain ATCC BAA-679 / EGD-e).